Reading from the N-terminus, the 202-residue chain is Holliday junction branch migration complex subunit RuvA (202 aa).

A domain I region spans residues 1-64 (MIGRLRGSLA…EDAHLLYGFY (64 aa)). The tract at residues 65-143 (EKRERELFRE…AWESLPGTFT (79 aa)) is domain II. Positions 144 to 153 (LVSNGPNQAE) are flexible linker. The domain III stretch occupies residues 154–202 (PVASAESDAVSALISLGYKPQEASKAVSAIKEKDLSSADLIRRALKGMG).

The protein belongs to the RuvA family. Homotetramer. Forms an RuvA(8)-RuvB(12)-Holliday junction (HJ) complex. HJ DNA is sandwiched between 2 RuvA tetramers; dsDNA enters through RuvA and exits via RuvB. An RuvB hexamer assembles on each DNA strand where it exits the tetramer. Each RuvB hexamer is contacted by two RuvA subunits (via domain III) on 2 adjacent RuvB subunits; this complex drives branch migration. In the full resolvosome a probable DNA-RuvA(4)-RuvB(12)-RuvC(2) complex forms which resolves the HJ.

The protein localises to the cytoplasm. Its function is as follows. The RuvA-RuvB-RuvC complex processes Holliday junction (HJ) DNA during genetic recombination and DNA repair, while the RuvA-RuvB complex plays an important role in the rescue of blocked DNA replication forks via replication fork reversal (RFR). RuvA specifically binds to HJ cruciform DNA, conferring on it an open structure. The RuvB hexamer acts as an ATP-dependent pump, pulling dsDNA into and through the RuvAB complex. HJ branch migration allows RuvC to scan DNA until it finds its consensus sequence, where it cleaves and resolves the cruciform DNA. In Pseudomonas savastanoi pv. phaseolicola (strain 1448A / Race 6) (Pseudomonas syringae pv. phaseolicola (strain 1448A / Race 6)), this protein is Holliday junction branch migration complex subunit RuvA.